The primary structure comprises 272 residues: MARLVAFDMDGTLLMPDHHLGEKTLSTLARLRERDITLTFATGRHALEMQHILGALSLDAYLITGNGTRVHSLEGELLHRDDLPADVAELVLYQQWDTRASMHIFNDDGWFTGKESPALLQVFVYSGFRYQIIDVKKMPLGSVTKICFCGDHDDLTRLQIQLYEALGERAHLCFSATDCLEVLPVGCNKGAALTVRTQHLGLSLRDCMAFGDAMNDREMLGSVGSGFIMGNAMPQLRAELPHLPVIGHCRNQAVSHYLTHWLDYPHLPYSPE.

D8 functions as the Nucleophile in the catalytic mechanism. D8, D10, and D212 together coordinate Mg(2+).

This sequence belongs to the HAD-like hydrolase superfamily. Cof family. Requires Mg(2+) as cofactor.

It catalyses the reaction 4-amino-2-methyl-5-(diphosphooxymethyl)pyrimidine + H2O = 4-amino-2-methyl-5-(phosphooxymethyl)pyrimidine + phosphate + H(+). In terms of biological role, catalyzes the hydrolysis of 4-amino-2-methyl-5-hydroxymethylpyrimidine pyrophosphate (HMP-PP) to 4-amino-2-methyl-5-hydroxymethylpyrimidine phosphate (HMP-P). This Shigella flexneri serotype 5b (strain 8401) protein is HMP-PP phosphatase.